The sequence spans 249 residues: tRNA (guanine-N(7)-)-methyltransferase (249 aa).

Residues 1 to 24 (MHSIPADTGHTPSRAPAGNGSPPA) are disordered. 4 residues coordinate S-adenosyl-L-methionine: Glu81, Glu106, Asp133, and Asp156. Asp156 is a catalytic residue. Lys160 lines the substrate pocket. The interval 162 to 167 (RHNKRR) is interaction with RNA. Substrate is bound by residues Asp192 and 227–230 (TKFE).

This sequence belongs to the class I-like SAM-binding methyltransferase superfamily. TrmB family.

The catalysed reaction is guanosine(46) in tRNA + S-adenosyl-L-methionine = N(7)-methylguanosine(46) in tRNA + S-adenosyl-L-homocysteine. It participates in tRNA modification; N(7)-methylguanine-tRNA biosynthesis. Its function is as follows. Catalyzes the formation of N(7)-methylguanine at position 46 (m7G46) in tRNA. The chain is tRNA (guanine-N(7)-)-methyltransferase from Paracidovorax citrulli (strain AAC00-1) (Acidovorax citrulli).